The following is a 112-amino-acid chain: Ribonuclease P protein component (112 aa).

It belongs to the RnpA family. In terms of assembly, consists of a catalytic RNA component (M1 or rnpB) and a protein subunit.

The enzyme catalyses Endonucleolytic cleavage of RNA, removing 5'-extranucleotides from tRNA precursor.. RNaseP catalyzes the removal of the 5'-leader sequence from pre-tRNA to produce the mature 5'-terminus. It can also cleave other RNA substrates such as 4.5S RNA. The protein component plays an auxiliary but essential role in vivo by binding to the 5'-leader sequence and broadening the substrate specificity of the ribozyme. This is Ribonuclease P protein component from Clostridium kluyveri (strain ATCC 8527 / DSM 555 / NBRC 12016 / NCIMB 10680 / K1).